The chain runs to 445 residues: ATP-dependent protease ATPase subunit HslU (445 aa).

Residues I17, 59 to 64, D254, E319, and R391 contribute to the ATP site; that span reads GVGKTE.

This sequence belongs to the ClpX chaperone family. HslU subfamily. As to quaternary structure, a double ring-shaped homohexamer of HslV is capped on each side by a ring-shaped HslU homohexamer. The assembly of the HslU/HslV complex is dependent on binding of ATP.

The protein resides in the cytoplasm. In terms of biological role, ATPase subunit of a proteasome-like degradation complex; this subunit has chaperone activity. The binding of ATP and its subsequent hydrolysis by HslU are essential for unfolding of protein substrates subsequently hydrolyzed by HslV. HslU recognizes the N-terminal part of its protein substrates and unfolds these before they are guided to HslV for hydrolysis. The chain is ATP-dependent protease ATPase subunit HslU from Pseudomonas fluorescens (strain Pf0-1).